Reading from the N-terminus, the 388-residue chain is Zinc finger protein 1 (388 aa).

The segment covering 1–19 (MSSIPNINWNDPNNGKSNT) has biased composition (polar residues). Disordered stretches follow at residues 1 to 120 (MSSI…QQPL), 157 to 219 (LQQR…QQWD), and 236 to 311 (SSIQ…KPIT). The segment covering 20–38 (SRQSQPQPQLPSNVSPPNS) has biased composition (low complexity). Composition is skewed to polar residues over residues 52–67 (YGSS…NPNT) and 88–97 (YPVQQTAQQR). Low complexity-rich tracts occupy residues 102–120 (LQQV…QQPL) and 157–172 (LQQR…KSQL). Residues 173–203 (NEQNAMMSASTQQYPVQDFTNPYPNAQNPAE) show a composition bias toward polar residues. Low complexity-rich tracts occupy residues 204 to 217 (QQQQ…QSQQ) and 236 to 259 (SSIQ…KQQQ). Over residues 268 to 278 (KKKPGRKPKLR) the composition is skewed to basic residues. Positions 282–294 (ESSSETPQVPKTA) are enriched in polar residues. A DNA-binding region (zn(2)-C6 fungal-type) is located at residues 318–345 (CLTCRQRKKRCCETRPRCTECTRLRLNC). The tract at residues 348 to 367 (PKPGTEHKNKPKDQKDDENT) is disordered. Basic and acidic residues predominate over residues 351-367 (GTEHKNKPKDQKDDENT).

Its subcellular location is the nucleus. In terms of biological role, perhaps a regulatory role. May be involved in transcriptional activation. The chain is Zinc finger protein 1 (CZF1) from Candida albicans (strain WO-1) (Yeast).